The primary structure comprises 514 residues: Arabinose import ATP-binding protein AraG (514 aa).

ABC transporter domains are found at residues 16 to 251 and 251 to 507; these read LRFN…MVGR and RDIQ…LPRH. 48-55 lines the ATP pocket; sequence GENGAGKS.

It belongs to the ABC transporter superfamily. Arabinose importer (TC 3.A.1.2.2) family. In terms of assembly, the complex is composed of two ATP-binding proteins (AraG), two transmembrane proteins (AraH) and a solute-binding protein (AraF).

It localises to the cell inner membrane. It carries out the reaction L-arabinose(out) + ATP + H2O = L-arabinose(in) + ADP + phosphate + H(+). Functionally, part of the ABC transporter complex AraFGH involved in arabinose import. Responsible for energy coupling to the transport system. The sequence is that of Arabinose import ATP-binding protein AraG from Pseudomonas fluorescens (strain Pf0-1).